The chain runs to 335 residues: Glucokinase (335 aa).

11 to 16 (ADIGGT) contacts ATP.

This sequence belongs to the bacterial glucokinase family.

It localises to the cytoplasm. The enzyme catalyses D-glucose + ATP = D-glucose 6-phosphate + ADP + H(+). This Xanthomonas campestris pv. campestris (strain 8004) protein is Glucokinase.